The sequence spans 426 residues: Probable serine/threonine-protein kinase PBL2 (426 aa).

Positions 1-54 (MGNCLDSSAKVDNSNHSPHANSASSGSKVSSKTSRSTGPSGLSTTSYSTDSSFG) are disordered. Gly-2 carries N-myristoyl glycine lipidation. A lipid anchor (S-palmitoyl cysteine) is attached at Cys-4. The segment covering 14 to 38 (SNHSPHANSASSGSKVSSKTSRSTG) has biased composition (low complexity). Residues 39 to 52 (PSGLSTTSYSTDSS) show a composition bias toward polar residues. At Thr-75 the chain carries Phosphothreonine. One can recognise a Protein kinase domain in the interval 86 to 369 (FRQDNLLGEG…SEVLVTLEQL (284 aa)). Residues 92–100 (LGEGGFGCV) and Lys-124 contribute to the ATP site. Residue Tyr-169 is modified to Phosphotyrosine. Asp-219 (proton acceptor) is an active-site residue. Position 253 is an O-UMP-serine (Ser-253). The residue at position 253 (Ser-253) is a Phosphoserine. A phosphothreonine mark is found at Thr-254 and Thr-259. Thr-254 carries the post-translational modification O-UMP-threonine. Tyr-267 carries the post-translational modification Phosphotyrosine. Residues 374-426 (KPGTKHTQMESPRFHHSSVMQKSPVRYSHDRPLLHMTPGASPLPSYTQSPRVR) are disordered. Residues 417–426 (PSYTQSPRVR) show a composition bias toward polar residues.

The protein belongs to the protein kinase superfamily. Ser/Thr protein kinase family. In terms of assembly, interacts with FLS2. Interacts with the Xanthomonas campestris effector XopAC/AvrAC; the recognition of X.campestris effector XopAC/AvrAC requires the presence of RKS1 and RPP13L4/ZAR1. Component of a stable high-order oligomeric complex made of RKS1 and RPP13L4/ZAR1 which recruits X.campestris effector XopAC/AvrAC-mediated uridylylated PBL2 in the presence of ATP to form a wheel-like pentameric resistosome; this complex triggers immunity toward X.campestris in vascular tissues. Binds to RKS1 when uridylylated. Post-translationally, uridylylated at Ser-253 and Thr-254 by Xanthomonas campestris effector AvrAC/XopAC; this uridylylation is necessary for specific recruitment to RKS1 and to trigger immunity. As to expression, strongly expressed in leaves, moderately in roots, and barely in flowers, mostly in pedicels.

The protein localises to the cell membrane. It localises to the nucleus. The enzyme catalyses L-seryl-[protein] + ATP = O-phospho-L-seryl-[protein] + ADP + H(+). It carries out the reaction L-threonyl-[protein] + ATP = O-phospho-L-threonyl-[protein] + ADP + H(+). Involved in disease resistance signaling. Contributes to pathogen-associated molecular pattern (PAMP)-triggered immunity (PTI) signaling and defense responses downstream of FLS2. Acts as a BIK1 decoy and enables Xanthomonas campestris AvrAC/XopAC detection; X.campestris effector AvrAC/XopAC-mediated uridylylation promotes the formation of a complex with RKS1 and RPP13L4/ZAR1 which, in turn, activates effector-triggered immunity (ETI) against X.campestris. Promotes, when uridylylated by AvrAC/XopAC, the release of ADP from the inactive RKS1-ZAR1 complex, thus activating the resistosome. The sequence is that of Probable serine/threonine-protein kinase PBL2 from Arabidopsis thaliana (Mouse-ear cress).